The primary structure comprises 307 residues: Protoheme IX farnesyltransferase (307 aa).

8 helical membrane passes run 32–52, 65–85, 108–128, 131–151, 158–178, 186–206, 251–271, and 287–307; these read MGIV…ALHF, FFTI…NNYI, PGFA…FLLL, PMAV…YSLW, LNTV…WAAI, IAWM…LALA, LGIT…VLGF, and FVYS…VTFF.

This sequence belongs to the UbiA prenyltransferase family. Protoheme IX farnesyltransferase subfamily. In terms of assembly, interacts with CtaA.

The protein localises to the cell membrane. The catalysed reaction is heme b + (2E,6E)-farnesyl diphosphate + H2O = Fe(II)-heme o + diphosphate. It participates in porphyrin-containing compound metabolism; heme O biosynthesis; heme O from protoheme: step 1/1. Its function is as follows. Converts heme B (protoheme IX) to heme O by substitution of the vinyl group on carbon 2 of heme B porphyrin ring with a hydroxyethyl farnesyl side group. This chain is Protoheme IX farnesyltransferase, found in Bacillus cereus (strain G9842).